A 474-amino-acid polypeptide reads, in one-letter code: MANAKGKVTQIIGAVVDVQFDGELPAILNALTTDNNGKKLVLEVAQHLGENSVRTIAMDATEGLVRGQEVTDTGAPISIPVGNATLGRILNVVGEPVDEGEPIVAKETRAIHQPAPEFNDQSTESEVLVTGIKVIDLLAPYAKGGKIGLFGGAGVGKTVLIMELINNIAKVHSGYSVFAGVGERTREGNDLYHEMIESNVIKPDNLEESQVALVYGQMNEPPGARARVALTGLTLAEQFRDQSGTDVLFFVDNIFRFTQAGSEVSALLGRIPSAVGYQPTLATDMGAMQERITSTKNGSITSIQAVYVPADDLTDPAPATTFAHLDATTVLNRAISELGIYPAVDPLDSSSRLMDPQIVGEEHYKVASDVQQILQRYKSLQDIIAILGMDELSEEDKLTVARARKIQRFLSQPFDVAKVFTGSDGVQVSLEDTIASFKAVVAGEYDHLPEGAFYMVGGIDEVIAKAEKMAADAA.

151-158 (GGAGVGKT) is an ATP binding site.

Belongs to the ATPase alpha/beta chains family. As to quaternary structure, F-type ATPases have 2 components, CF(1) - the catalytic core - and CF(0) - the membrane proton channel. CF(1) has five subunits: alpha(3), beta(3), gamma(1), delta(1), epsilon(1). CF(0) has three main subunits: a(1), b(2) and c(9-12). The alpha and beta chains form an alternating ring which encloses part of the gamma chain. CF(1) is attached to CF(0) by a central stalk formed by the gamma and epsilon chains, while a peripheral stalk is formed by the delta and b chains.

Its subcellular location is the cell inner membrane. It catalyses the reaction ATP + H2O + 4 H(+)(in) = ADP + phosphate + 5 H(+)(out). Produces ATP from ADP in the presence of a proton gradient across the membrane. The catalytic sites are hosted primarily by the beta subunits. The chain is ATP synthase subunit beta from Ruegeria sp. (strain TM1040) (Silicibacter sp.).